Consider the following 755-residue polypeptide: Leucine-rich repeat-containing protein 36 (755 aa).

LRR repeat units lie at residues 51-72 (SLRS…QYLC) and 73-94 (SLQE…SRLQ). Residues 107–146 (NPVVRKDTDYRLFAVYTLQTLEKLDDRAVRDSERRAAKLH) enclose the LRRCT domain. Disordered regions lie at residues 354–374 (GKNY…TTSH) and 448–517 (LPPG…PPIS). Over residues 356–370 (NYREHSIKPSQDKKA) the composition is skewed to basic and acidic residues. Positions 498–510 (LSSDLGSLHGLSG) are enriched in low complexity. The stretch at 601-671 (VESLKQKLVK…ELTQLKRLEE (71 aa)) forms a coiled coil. The interval 701 to 755 (YSGKSLLPPEKSHPLGRSSPFGKSTLSSSSPMVHDTGQYLIQSVSEADPEPSLWS) is disordered. The segment covering 721–731 (FGKSTLSSSSP) has biased composition (polar residues).

The chain is Leucine-rich repeat-containing protein 36 (Lrrc36) from Mus musculus (Mouse).